The following is a 602-amino-acid chain: MGRKWTYCVVYTIIQIQFFRGVWEELFNVGDDVYALPGSDINLTCQTKEKNFLVQMQWSKVTDKNDMIALYHPQYGLYCGQEHACESQVAATETEKGVTNWTLYLRNISSALGGKYECIFTLYPEGIKTTVYNLIVEPYTQDEHNYTIEIETNRTLEIPCFQNTSSEIPPRFTFSWLVEKDGVEEVLFTHHHHVNNSTSFKGRIRLGGDYRLHLSPVQIQDDGRTFSCHLTVNPLKAWKMSTTVKVFAKPEILMTVENSTMDVLGERVFTCLLKNVFPKANITWFIDGRFLQGNEEGIYITNEEKNCSSGFWELKSVLTRMHSGPSQSNNMTAWCMALSPGPRNKMWNTSSQPITVSFDSVIAPTKHLPTVTGSTLGTQPFSDAGVSPTGYLATPSVTIVDENGLTPDATPQTSNSSMTTKDGNYLEASSGTDAKNSSRAAASSKSGSWPFPFTSPPEWHSLPGTSTGPQEPDSPVSWIPSEVHTSAPLDASLAPHDTIISTTTEFPNVLTTANGTTKIDHGPITSIIVNQPSDGMSWPVLVAALLFFCTLLFGLGVRKWYRYQNEIMERPPPFKPPPPPIKYTYIQEPIGCDLCCHEMEVL.

Positions 1–21 (MGRKWTYCVVYTIIQIQFFRG) are cleaved as a signal peptide. Residues 22–536 (VWEELFNVGD…IIVNQPSDGM (515 aa)) lie on the Extracellular side of the membrane. Ig-like V-type domains lie at 24–134 (EELF…VYNL) and 138–244 (PYTQ…STTV). 16 N-linked (GlcNAc...) asparagine glycosylation sites follow: Asn42, Asn100, Asn107, Asn145, Asn153, Asn163, Asn195, Asn196, Asn258, Asn281, Asn306, Asn330, Asn348, Asn415, Asn436, and Asn514. The cysteines at positions 45 and 118 are disulfide-linked. A disulfide bond links Cys160 and Cys228. Positions 250 to 355 (PEILMTVENS…MWNTSSQPIT (106 aa)) constitute an Ig-like C2-type domain. Cys271 and Cys335 form a disulfide bridge. The segment at 402–478 (ENGLTPDATP…PQEPDSPVSW (77 aa)) is disordered. The span at 409 to 433 (ATPQTSNSSMTTKDGNYLEASSGTD) shows a compositional bias: polar residues. Residues 434-448 (AKNSSRAAASSKSGS) show a composition bias toward low complexity. A helical membrane pass occupies residues 537–557 (SWPVLVAALLFFCTLLFGLGV). Residues 558 to 602 (RKWYRYQNEIMERPPPFKPPPPPIKYTYIQEPIGCDLCCHEMEVL) lie on the Cytoplasmic side of the membrane.

In terms of assembly, homodimer; disulfide-linked. Interacts with PVR.

It is found in the membrane. In terms of biological role, may be involved in adhesive interactions of activated T and NK cells during the late phase of the immune response. Promotes NK cell-target adhesion by interacting with PVR present on target cells. May function at a time after T and NK cells have penetrated the endothelium using integrins and selectins, when they are actively engaging diseased cells and moving within areas of inflammation. The protein is T-cell surface protein tactile (Cd96) of Mus musculus (Mouse).